We begin with the raw amino-acid sequence, 59 residues long: Large ribosomal subunit protein bL32 (59 aa).

The segment at 1–24 (MAVQQNKKSPSKRGMHRSHDFLTS) is disordered.

It belongs to the bacterial ribosomal protein bL32 family.

This chain is Large ribosomal subunit protein bL32, found in Ralstonia nicotianae (strain ATCC BAA-1114 / GMI1000) (Ralstonia solanacearum).